We begin with the raw amino-acid sequence, 319 residues long: Ninja-family protein AFP4 (319 aa).

The segment covering 39 to 54 has biased composition (basic and acidic residues); the sequence is DSEHGENQQEAKKRED. 3 disordered regions span residues 39–63, 99–120, and 205–228; these read DSEH…EKDV, FVFD…IVGR, and VTGP…NVEN.

Belongs to the Ninja family. As to quaternary structure, interacts with ABI5/DPBF1, AREB3/DPBF3, EEL/DPBF4, ABF1 and ABF3/DPBF5. In terms of tissue distribution, predominantly expressed in roots and seedlings.

It is found in the nucleus. Functionally, acts as a negative regulator of abscisic acid (ABA) and salinity responses. This chain is Ninja-family protein AFP4 (AFP4), found in Arabidopsis thaliana (Mouse-ear cress).